Here is a 218-residue protein sequence, read N- to C-terminus: Large ribosomal subunit protein bL25 (218 aa).

Residues 187–218 (SATAAVEEAKEDGAPEESAQGQGAAEAQETNK) form a disordered region. The segment covering 202-218 (EESAQGQGAAEAQETNK) has biased composition (low complexity).

It belongs to the bacterial ribosomal protein bL25 family. CTC subfamily. As to quaternary structure, part of the 50S ribosomal subunit; part of the 5S rRNA/L5/L18/L25 subcomplex. Contacts the 5S rRNA. Binds to the 5S rRNA independently of L5 and L18.

Its function is as follows. This is one of the proteins that binds to the 5S RNA in the ribosome where it forms part of the central protuberance. The sequence is that of Large ribosomal subunit protein bL25 from Anaplasma marginale (strain St. Maries).